Reading from the N-terminus, the 169-residue chain is Large ribosomal subunit protein uL10 (169 aa).

Belongs to the universal ribosomal protein uL10 family. As to quaternary structure, part of the ribosomal stalk of the 50S ribosomal subunit. The N-terminus interacts with L11 and the large rRNA to form the base of the stalk. The C-terminus forms an elongated spine to which L12 dimers bind in a sequential fashion forming a multimeric L10(L12)X complex.

Its function is as follows. Forms part of the ribosomal stalk, playing a central role in the interaction of the ribosome with GTP-bound translation factors. In Rickettsia rickettsii (strain Iowa), this protein is Large ribosomal subunit protein uL10.